A 420-amino-acid polypeptide reads, in one-letter code: UDP-N-acetyl-D-mannosamine dehydrogenase (420 aa).

Positions 13, 14, 33, 85, and 126 each coordinate NAD(+). Residues Arg-160, Val-161, Lys-212, Asn-216, Arg-219, His-250, Arg-252, and Gly-263 each contribute to the UDP-N-acetyl-alpha-D-mannosaminouronate site. The Proton donor/acceptor role is filled by Lys-212. The Nucleophile role is filled by Cys-266. UDP-N-acetyl-alpha-D-mannosaminouronate contacts are provided by Phe-330 and Lys-331. Arg-338 contributes to the NAD(+) binding site. Lys-416 lines the UDP-N-acetyl-alpha-D-mannosaminouronate pocket.

Belongs to the UDP-glucose/GDP-mannose dehydrogenase family. WecC subfamily. In terms of assembly, homodimer.

The enzyme catalyses UDP-N-acetyl-alpha-D-mannosamine + 2 NAD(+) + H2O = UDP-N-acetyl-alpha-D-mannosaminouronate + 2 NADH + 3 H(+). Its pathway is bacterial outer membrane biogenesis; enterobacterial common antigen biosynthesis. In terms of biological role, catalyzes the four-electron oxidation of UDP-N-acetyl-D-mannosamine (UDP-ManNAc), reducing NAD(+) and releasing UDP-N-acetylmannosaminuronic acid (UDP-ManNAcA). This chain is UDP-N-acetyl-D-mannosamine dehydrogenase, found in Shigella flexneri.